A 34-amino-acid polypeptide reads, in one-letter code: MATVLSQSEIYIALVVAAHAAILALRLSVSLYRS.

Residues 10–32 (IYIALVVAAHAAILALRLSVSLY) form a helical membrane-spanning segment.

It belongs to the PsaM family.

The protein localises to the cellular thylakoid membrane. The sequence is that of Photosystem I reaction center subunit XII from Synechococcus sp. (strain RCC307).